Consider the following 615-residue polypeptide: MAQASGMDPLVDIEDERPKWDNKLQYLLSCIGFAVGLGNIWRFPYLCHTHGGGAFLIPYFIALVFEGIPLFYIELAIGQRLRRGSIGVWKTISPYLGGVGLGCFSVSFLVSLYYNTILLWVLWFFLNSFQHPLPWSTCPLDLNRTGFVQECQSSGTVSYFWYRQTLNITSDISNTGTIQWKLFLCLVACWTTVYLCVIRGIESTGKVIYFTALFPYLVLTIFLIRGLTLPGATEGLTYLFTPNMKILQNSRVWLDAATQIFFSLSLAFGGHIAFASYNQPRNNCEKDAVTIALVNSMTSLYASITIFSIMGFKASNDYGRCLDRNILSLINEFDFPELSISRDEYPSVLMYLNATQPERVARLPLKTCHLEDFLDKSASGPGLAFIVFTEAVLHMPGASVWSVLFFGMLFTLGLSSMFGNMEGVITPLFDMGILPKGVPKETMTGVVCFICFLSAICFTLQSGSYWLEIFDSFAASLNLIIFAFMEVVGVIHVYGIKRFCDDIEWMTGRRPSLYWQVTWRVVSPMLLFGIFLSYIVLLAQSSPSYKAWNPQYEHFPSREEKLYPGWVQVTCVLLSFLPSLWVPGIALAQLLFQYRQRWKNTHLESALKPQESRGC.

The Cytoplasmic portion of the chain corresponds to 1-26; that stretch reads MAQASGMDPLVDIEDERPKWDNKLQY. A helical transmembrane segment spans residues 27–47; it reads LLSCIGFAVGLGNIWRFPYLC. Over 48–52 the chain is Extracellular; that stretch reads HTHGG. Residues 53–73 form a helical membrane-spanning segment; the sequence is GAFLIPYFIALVFEGIPLFYI. Residues 74–105 are Cytoplasmic-facing; it reads ELAIGQRLRRGSIGVWKTISPYLGGVGLGCFS. A helical transmembrane segment spans residues 106-126; that stretch reads VSFLVSLYYNTILLWVLWFFL. Topologically, residues 127-177 are extracellular; it reads NSFQHPLPWSTCPLDLNRTGFVQECQSSGTVSYFWYRQTLNITSDISNTGT. 2 N-linked (GlcNAc...) asparagine glycosylation sites follow: N143 and N167. A helical transmembrane segment spans residues 178 to 198; sequence IQWKLFLCLVACWTTVYLCVI. The Cytoplasmic portion of the chain corresponds to 199–206; it reads RGIESTGK. Residues 207–227 form a helical membrane-spanning segment; the sequence is VIYFTALFPYLVLTIFLIRGL. Residues 228–255 lie on the Extracellular side of the membrane; that stretch reads TLPGATEGLTYLFTPNMKILQNSRVWLD. The helical transmembrane segment at 256 to 276 threads the bilayer; sequence AATQIFFSLSLAFGGHIAFAS. The Cytoplasmic segment spans residues 277 to 290; it reads YNQPRNNCEKDAVT. A helical transmembrane segment spans residues 291 to 311; that stretch reads IALVNSMTSLYASITIFSIMG. At 312–397 the chain is on the extracellular side; the sequence is FKASNDYGRC…FTEAVLHMPG (86 aa). N353 is a glycosylation site (N-linked (GlcNAc...) asparagine). A helical transmembrane segment spans residues 398 to 418; that stretch reads ASVWSVLFFGMLFTLGLSSMF. Residues 419 to 442 lie on the Cytoplasmic side of the membrane; that stretch reads GNMEGVITPLFDMGILPKGVPKET. A helical membrane pass occupies residues 443-463; that stretch reads MTGVVCFICFLSAICFTLQSG. Topologically, residues 464–472 are extracellular; the sequence is SYWLEIFDS. The helical transmembrane segment at 473 to 493 threads the bilayer; sequence FAASLNLIIFAFMEVVGVIHV. The Cytoplasmic segment spans residues 494-520; it reads YGIKRFCDDIEWMTGRRPSLYWQVTWR. A helical membrane pass occupies residues 521 to 541; that stretch reads VVSPMLLFGIFLSYIVLLAQS. At 542 to 571 the chain is on the extracellular side; the sequence is SPSYKAWNPQYEHFPSREEKLYPGWVQVTC. Residues 572–592 traverse the membrane as a helical segment; that stretch reads VLLSFLPSLWVPGIALAQLLF. The Cytoplasmic segment spans residues 593–615; that stretch reads QYRQRWKNTHLESALKPQESRGC.

The protein belongs to the sodium:neurotransmitter symporter (SNF) (TC 2.A.22) family. SLC6A18 subfamily. In terms of assembly, interacts with CLTRN; this interaction regulates the trafficking of SLC6A18 to the cell membrane and its activity. Kidney-specific expression.

It is found in the apical cell membrane. The protein resides in the cell membrane. The catalysed reaction is L-alanine(out) + chloride(out) + 2 Na(+)(out) = L-alanine(in) + chloride(in) + 2 Na(+)(in). The enzyme catalyses glycine(out) + chloride(out) + 2 Na(+)(out) = glycine(in) + chloride(in) + 2 Na(+)(in). It carries out the reaction L-methionine(out) + chloride(out) + 2 Na(+)(out) = L-methionine(in) + chloride(in) + 2 Na(+)(in). It catalyses the reaction L-valine(out) + chloride(out) + 2 Na(+)(out) = L-valine(in) + chloride(in) + 2 Na(+)(in). The catalysed reaction is L-isoleucine(out) + chloride(out) + 2 Na(+)(out) = L-isoleucine(in) + chloride(in) + 2 Na(+)(in). The enzyme catalyses L-serine(out) + chloride(out) + 2 Na(+)(out) = L-serine(in) + chloride(in) + 2 Na(+)(in). It carries out the reaction L-leucine(out) + chloride(out) + 2 Na(+)(out) = L-leucine(in) + chloride(in) + 2 Na(+)(in). In terms of biological role, symporter that transports one amino acid molecule together with two sodium and one chloride ions in kidneys and plays a role in the neutral amino acids reabsorption. Preferentially transports neutral amino acids such as L-glycine and L-alanine but also other neutral amino acids. Required CLTRN for cell surface expression and for its amino acid transporter activity. The transport mechanism is pH-independent. In Rattus norvegicus (Rat), this protein is Sodium-dependent neutral amino acid transporter B(0)AT3.